The chain runs to 438 residues: Arginine deiminase-like protein (438 aa).

The protein belongs to the arginine deiminase family.

This is Arginine deiminase-like protein from Mycoplasma pneumoniae (strain ATCC 29342 / M129 / Subtype 1) (Mycoplasmoides pneumoniae).